A 284-amino-acid polypeptide reads, in one-letter code: Ribosomal RNA small subunit methyltransferase A (284 aa).

S-adenosyl-L-methionine is bound by residues Asn12, Leu14, Gly38, Glu59, Asp81, and Asn106.

Belongs to the class I-like SAM-binding methyltransferase superfamily. rRNA adenine N(6)-methyltransferase family. RsmA subfamily.

It is found in the cytoplasm. The catalysed reaction is adenosine(1518)/adenosine(1519) in 16S rRNA + 4 S-adenosyl-L-methionine = N(6)-dimethyladenosine(1518)/N(6)-dimethyladenosine(1519) in 16S rRNA + 4 S-adenosyl-L-homocysteine + 4 H(+). Specifically dimethylates two adjacent adenosines (A1518 and A1519) in the loop of a conserved hairpin near the 3'-end of 16S rRNA in the 30S particle. May play a critical role in biogenesis of 30S subunits. The chain is Ribosomal RNA small subunit methyltransferase A from Phytoplasma australiense.